The chain runs to 180 residues: Large ribosomal subunit protein uL5c (180 aa).

Belongs to the universal ribosomal protein uL5 family. As to quaternary structure, part of the 50S ribosomal subunit; contacts the 5S rRNA.

The protein resides in the plastid. Its subcellular location is the chloroplast. Binds 5S rRNA, forms part of the central protuberance of the 50S subunit. The protein is Large ribosomal subunit protein uL5c (rpl5) of Oedogonium cardiacum (Filamentous green alga).